A 548-amino-acid polypeptide reads, in one-letter code: MDSQRNLLVIALLFVSFMIWQAWEQDKNPQPQTQQTTQTTTTAAGSAADQGVPASGQGKMITVKTDVLDLTINTRGGDVEQALLPAYPKELGSNEPFQLLETTPQFIYQAQSGLTGRGGPDNPANGPRPLYNVEKEAFVLADGQNELQVPMTYTDAAGNTFTKTFVFKRGDYAVNVNYSVQNAGEKPLEVSTFGQLKQSVNLPPHRDTGSSNFALHTFRGAAYSTPDEKYEKYKFDTIADNENLNVSSKGGWVAMLQQYFATAWIPRNDGTNNFYTANLGNGIVAIGYKAQPVLVQPGQTGAMTSTLWVGPEIQDKMAAVAPHLDLTVDYGWLWFISQPLFKLLKWIHSFVGNWGFSIIIITFIVRGIMYPLTKAQYTSMAKMRMLQPKIQAMRERLGDDKQRQSQEMMALYKAEKVNPLGGCFPLIIQMPIFLALYYMLMGSIELRHAPFALWIHDLSAQDPYYILPILMGVTMFFIQKMSPTTVTDPMQQKIMTFMPVIFTVFFLWFPSGLVLYYIVSNLVTIIQQQLIYRGLEKRGLHSREKKKS.

A helical transmembrane segment spans residues Asn6–Asp26. Residues Asn28–Gly56 form a disordered region. The segment covering Pro29–Thr42 has biased composition (low complexity). Helical transmembrane passes span Phe350–Tyr370, Phe424–Ile444, Leu458–Ile478, and Pro499–Val519.

This sequence belongs to the OXA1/ALB3/YidC family. Type 1 subfamily. As to quaternary structure, interacts with the Sec translocase complex via SecD. Specifically interacts with transmembrane segments of nascent integral membrane proteins during membrane integration.

The protein resides in the cell inner membrane. Functionally, required for the insertion and/or proper folding and/or complex formation of integral membrane proteins into the membrane. Involved in integration of membrane proteins that insert both dependently and independently of the Sec translocase complex, as well as at least some lipoproteins. Aids folding of multispanning membrane proteins. The protein is Membrane protein insertase YidC of Salmonella newport (strain SL254).